Reading from the N-terminus, the 186-residue chain is dCTP deaminase (186 aa).

106–111 contacts dCTP; sequence KSTYAR. Glutamate 132 (proton donor/acceptor) is an active-site residue. Residues glutamine 151, tyrosine 166, and glutamine 176 each contribute to the dCTP site.

This sequence belongs to the dCTP deaminase family. In terms of assembly, homotrimer.

The enzyme catalyses dCTP + H2O + H(+) = dUTP + NH4(+). It participates in pyrimidine metabolism; dUMP biosynthesis; dUMP from dCTP (dUTP route): step 1/2. In terms of biological role, catalyzes the deamination of dCTP to dUTP. The protein is dCTP deaminase of Nautilia profundicola (strain ATCC BAA-1463 / DSM 18972 / AmH).